The primary structure comprises 312 residues: Isethionate sulfite-lyase activating enzyme (312 aa).

Residues 20 to 304 (HDGPGIRTIV…GLQKTALDIL (285 aa)) form the Radical SAM core domain. Positions 34, 38, 41, 60, 66, 69, 73, 93, 96, 100, and 104 each coordinate [4Fe-4S] cluster. 40–42 (WCS) contacts S-adenosyl-L-methionine. 4Fe-4S ferredoxin-type domains follow at residues 51-83 (AELA…CGDD) and 84-115 (DKPR…YGKK). S-adenosyl-L-methionine-binding positions include G144, 193 to 195 (DIK), and H267.

It belongs to the organic radical-activating enzymes family. As to quaternary structure, monomer. Requires [4Fe-4S] cluster as cofactor.

The catalysed reaction is glycyl-[protein] + reduced [flavodoxin] + S-adenosyl-L-methionine = glycin-2-yl radical-[protein] + semiquinone [flavodoxin] + 5'-deoxyadenosine + L-methionine + H(+). Its pathway is organosulfur degradation; alkanesulfonate degradation. Functionally, involved in an anaerobic respiration pathway that converts the sulfonate isethionate (2-hydroxyethanesulfonate) to ammonia, acetate and sulfide. Catalyzes activation of the isethionate sulfite-lyase IslA under anaerobic conditions by generation of an organic free radical on a glycine residue, via a homolytic cleavage of S-adenosyl-L-methionine (SAM). The chain is Isethionate sulfite-lyase activating enzyme from Desulfovibrio desulfuricans (strain ATCC 27774 / DSM 6949 / MB).